Reading from the N-terminus, the 502-residue chain is MXXXXGYLEFDGARQQSFLYPLFFREYIYVLAYDQGLNRLNRNRSIFLENADYDKKYSSLIVKRLILRMYEQNRLIIPTKGLNKNLGHTNLFYYQMISVLFAVIVEIPFSLRLGSSFEGKKLKKSYNLQSIHSIFPFLEDKFSHFNYVLDVLIPYPIHLEILVQTLRYRVKDASSLHFFRFCLYEYCNWKNFYSKKKSILNPRFLLFLYNSHVCEYESIFFFLRKRSSHLRSTSYEVFFERILFYGKIQHFLKVFINNFPAILGLLKDPFLHYVRYHGKCILATKDTPLLMNKWKYYFVNLWQCYFSVWFQSQKVNINKLSKDNLEFLGYLSSLRLNPLVVRSQMLENSFLIDNVRIKLDSKIPISSIIGSLAKDKFCNVLGHPISKATWTDSSDSDILNRFVRICRNISHYYSGSSKKKNLYRIKYILRLCCVKTLARKHKSTVRAFLKRLGSGLLEEFLTGEDQVLSLIFQRSDYASKRLYRVRVWYLDILYLNDLVNHE.

Belongs to the intron maturase 2 family. MatK subfamily.

Its subcellular location is the plastid. The protein localises to the chloroplast. Usually encoded in the trnK tRNA gene intron. Probably assists in splicing its own and other chloroplast group II introns. This is Maturase K from Sisymbrium irio (London rocket).